Here is a 270-residue protein sequence, read N- to C-terminus: Fluoride-specific ion channel FluC 1 (270 aa).

The next 4 helical transmembrane spans lie at 4–24, 35–55, 67–87, and 96–116; these read IIILVVIGGAFGAMTREFIML, LDILVANVVACFLLGTVTALY, IIGTGMMGGVSTFSSFAYGSV, and AFLIAAAYVTVSVVAGYVAVL. Gly-74 and Ser-77 together coordinate Na(+).

The protein belongs to the fluoride channel Fluc/FEX (TC 1.A.43) family.

Its subcellular location is the cell inner membrane. It catalyses the reaction fluoride(in) = fluoride(out). With respect to regulation, na(+) is not transported, but it plays an essential structural role and its presence is essential for fluoride channel function. Functionally, fluoride-specific ion channel. Important for reducing fluoride concentration in the cell, thus reducing its toxicity. This chain is Fluoride-specific ion channel FluC 1, found in Brucella abortus biovar 1 (strain 9-941).